Reading from the N-terminus, the 423-residue chain is AP-1 complex subunit mu-2 (423 aa).

One can recognise an MHD domain in the interval Lys-168 to Arg-421.

This sequence belongs to the adaptor complexes medium subunit family. As to quaternary structure, adaptor protein complex 1 (AP-1) is a heterotetramer composed of two large adaptins (gamma-type subunit AP1G1 and beta-type subunit AP1B1), a medium adaptin (mu-type subunit AP1M1 or AP1M2) and a small adaptin (sigma-type subunit AP1S1 or AP1S2 or AP1S3). Interacts with P2X4. Post-translationally, phosphorylation of membrane-bound AP1M1/AP1M2 increases its affinity for sorting signals.

The protein localises to the golgi apparatus. Its subcellular location is the cytoplasmic vesicle. It is found in the clathrin-coated vesicle membrane. In terms of biological role, subunit of clathrin-associated adaptor protein complex 1 that plays a role in protein sorting in the trans-Golgi network (TGN) and endosomes. The AP complexes mediate the recruitment of clathrin to membranes and the recognition of sorting signals within the cytosolic tails of transmembrane cargo molecules. This is AP-1 complex subunit mu-2 (AP1M2) from Homo sapiens (Human).